Consider the following 1191-residue polypeptide: DNA topoisomerase 2 (1191 aa).

Residues asparagine 64, asparagine 95, and 142–149 (GTNGVGLK) contribute to the ATP site. Positions 437, 538, and 540 each coordinate Mg(2+). The Topo IIA-type catalytic domain occupies 706–1173 (IPNFLDGMTR…PGASVWLEEI (468 aa)). Tyrosine 799 serves as the catalytic O-(5'-phospho-DNA)-tyrosine intermediate.

The protein belongs to the type II topoisomerase family. It depends on Mg(2+) as a cofactor. Requires Mn(2+) as cofactor. The cofactor is Ca(2+).

Its subcellular location is the host cytoplasm. The enzyme catalyses ATP-dependent breakage, passage and rejoining of double-stranded DNA.. In terms of biological role, type II topoisomerase. Processively relaxes supercoiled DNA. Displays DNA-supercoiling activity only when associated with the viral histone-like protein. In Ornithodoros (relapsing fever ticks), this protein is DNA topoisomerase 2.